Here is a 714-residue protein sequence, read N- to C-terminus: ABC transporter B family member 28 (714 aa).

A run of 5 helical transmembrane segments spans residues 109 to 129, 161 to 181, 240 to 260, 340 to 360, and 361 to 381; these read LSVC…MPVF, IFTI…MAIL, ICIL…LMLA, VAVY…VKTG, and ELAV…TFAV. The 285-residue stretch at 109-393 folds into the ABC transmembrane type-1 domain; the sequence is LSVCLLTLLG…LVNTFGDLRG (285 aa). In terms of domain architecture, ABC transporter spans 470–708; that stretch reads VCLDDVHFAY…KGSYASLVGT (239 aa). 505-512 is an ATP binding site; sequence GSSGAGKS.

It belongs to the ABC transporter superfamily. ABCB family. Multidrug resistance exporter (TC 3.A.1.201) subfamily.

Its subcellular location is the membrane. This Arabidopsis thaliana (Mouse-ear cress) protein is ABC transporter B family member 28 (ABCB28).